The chain runs to 213 residues: ATP phosphoribosyltransferase (213 aa).

It belongs to the ATP phosphoribosyltransferase family. Short subfamily. As to quaternary structure, heteromultimer composed of HisG and HisZ subunits.

The protein localises to the cytoplasm. It carries out the reaction 1-(5-phospho-beta-D-ribosyl)-ATP + diphosphate = 5-phospho-alpha-D-ribose 1-diphosphate + ATP. It functions in the pathway amino-acid biosynthesis; L-histidine biosynthesis; L-histidine from 5-phospho-alpha-D-ribose 1-diphosphate: step 1/9. Its function is as follows. Catalyzes the condensation of ATP and 5-phosphoribose 1-diphosphate to form N'-(5'-phosphoribosyl)-ATP (PR-ATP). Has a crucial role in the pathway because the rate of histidine biosynthesis seems to be controlled primarily by regulation of HisG enzymatic activity. This chain is ATP phosphoribosyltransferase, found in Bacillus pumilus (strain SAFR-032).